Reading from the N-terminus, the 636-residue chain is Threonine--tRNA ligase (636 aa).

The region spanning 1 to 63 (MNEINVTLPD…ADGARVEIIT (63 aa)) is the TGS domain. Residues 243–534 (DHRKLGRELD…LIEHFAGNFP (292 aa)) are catalytic. Residues cysteine 335, histidine 386, and histidine 511 each coordinate Zn(2+).

The protein belongs to the class-II aminoacyl-tRNA synthetase family. Homodimer. Requires Zn(2+) as cofactor.

It localises to the cytoplasm. It catalyses the reaction tRNA(Thr) + L-threonine + ATP = L-threonyl-tRNA(Thr) + AMP + diphosphate + H(+). Catalyzes the attachment of threonine to tRNA(Thr) in a two-step reaction: L-threonine is first activated by ATP to form Thr-AMP and then transferred to the acceptor end of tRNA(Thr). Also edits incorrectly charged L-seryl-tRNA(Thr). The polypeptide is Threonine--tRNA ligase (Citrifermentans bemidjiense (strain ATCC BAA-1014 / DSM 16622 / JCM 12645 / Bem) (Geobacter bemidjiensis)).